A 560-amino-acid polypeptide reads, in one-letter code: Dihydroxy-acid dehydratase (560 aa).

Residue cysteine 50 participates in [2Fe-2S] cluster binding. Residue aspartate 82 participates in Mg(2+) binding. Cysteine 123 lines the [2Fe-2S] cluster pocket. Mg(2+) contacts are provided by aspartate 124 and lysine 125. Lysine 125 carries the post-translational modification N6-carboxylysine. Residue cysteine 195 participates in [2Fe-2S] cluster binding. Glutamate 447 lines the Mg(2+) pocket. The Proton acceptor role is filled by serine 473.

The protein belongs to the IlvD/Edd family. In terms of assembly, homodimer. The cofactor is [2Fe-2S] cluster. Mg(2+) is required as a cofactor.

It carries out the reaction (2R)-2,3-dihydroxy-3-methylbutanoate = 3-methyl-2-oxobutanoate + H2O. It catalyses the reaction (2R,3R)-2,3-dihydroxy-3-methylpentanoate = (S)-3-methyl-2-oxopentanoate + H2O. Its pathway is amino-acid biosynthesis; L-isoleucine biosynthesis; L-isoleucine from 2-oxobutanoate: step 3/4. It participates in amino-acid biosynthesis; L-valine biosynthesis; L-valine from pyruvate: step 3/4. In terms of biological role, functions in the biosynthesis of branched-chain amino acids. Catalyzes the dehydration of (2R,3R)-2,3-dihydroxy-3-methylpentanoate (2,3-dihydroxy-3-methylvalerate) into 2-oxo-3-methylpentanoate (2-oxo-3-methylvalerate) and of (2R)-2,3-dihydroxy-3-methylbutanoate (2,3-dihydroxyisovalerate) into 2-oxo-3-methylbutanoate (2-oxoisovalerate), the penultimate precursor to L-isoleucine and L-valine, respectively. The chain is Dihydroxy-acid dehydratase from Methylibium petroleiphilum (strain ATCC BAA-1232 / LMG 22953 / PM1).